A 62-amino-acid chain; its full sequence is DNA-binding protein 7b (62 aa).

It belongs to the 7 kDa DNA-binding/endoribonuclease P2 family. Monomer.

Its subcellular location is the cytoplasm. Functionally, can constrain negative DNA supercoils. May be involved in maintaining the integrity of the genome at high temperature. This Acidianus hospitalis (strain W1) protein is DNA-binding protein 7b.